The sequence spans 151 residues: D-aminoacyl-tRNA deacylase (151 aa).

Residues Gly-142–Pro-143 carry the Gly-cisPro motif, important for rejection of L-amino acids motif.

Belongs to the DTD family. In terms of assembly, homodimer.

Its subcellular location is the cytoplasm. It catalyses the reaction glycyl-tRNA(Ala) + H2O = tRNA(Ala) + glycine + H(+). The catalysed reaction is a D-aminoacyl-tRNA + H2O = a tRNA + a D-alpha-amino acid + H(+). Functionally, an aminoacyl-tRNA editing enzyme that deacylates mischarged D-aminoacyl-tRNAs. Also deacylates mischarged glycyl-tRNA(Ala), protecting cells against glycine mischarging by AlaRS. Acts via tRNA-based rather than protein-based catalysis; rejects L-amino acids rather than detecting D-amino acids in the active site. By recycling D-aminoacyl-tRNA to D-amino acids and free tRNA molecules, this enzyme counteracts the toxicity associated with the formation of D-aminoacyl-tRNA entities in vivo and helps enforce protein L-homochirality. This is D-aminoacyl-tRNA deacylase from Psychrobacter cryohalolentis (strain ATCC BAA-1226 / DSM 17306 / VKM B-2378 / K5).